We begin with the raw amino-acid sequence, 286 residues long: 4-hydroxy-tetrahydrodipicolinate synthase (286 aa).

T42 contributes to the pyruvate binding site. Y129 functions as the Proton donor/acceptor in the catalytic mechanism. K157 (schiff-base intermediate with substrate) is an active-site residue. Residue I196 participates in pyruvate binding.

The protein belongs to the DapA family. In terms of assembly, homotetramer; dimer of dimers.

It is found in the cytoplasm. It carries out the reaction L-aspartate 4-semialdehyde + pyruvate = (2S,4S)-4-hydroxy-2,3,4,5-tetrahydrodipicolinate + H2O + H(+). It participates in amino-acid biosynthesis; L-lysine biosynthesis via DAP pathway; (S)-tetrahydrodipicolinate from L-aspartate: step 3/4. In terms of biological role, catalyzes the condensation of (S)-aspartate-beta-semialdehyde [(S)-ASA] and pyruvate to 4-hydroxy-tetrahydrodipicolinate (HTPA). This chain is 4-hydroxy-tetrahydrodipicolinate synthase, found in Chlamydia trachomatis serovar A (strain ATCC VR-571B / DSM 19440 / HAR-13).